We begin with the raw amino-acid sequence, 303 residues long: Ubiquinone biosynthesis protein COQ4, mitochondrial (303 aa).

Zn(2+) is bound by residues His191, Asp192, His195, and Glu207.

This sequence belongs to the COQ4 family. In terms of assembly, component of a multi-subunit COQ enzyme complex, composed of at least COQ3, COQ4, COQ5, COQ6, COQ7 and COQ9. It depends on Zn(2+) as a cofactor.

The protein localises to the mitochondrion inner membrane. It carries out the reaction a 4-hydroxy-3-methoxy-5-(all-trans-polyprenyl)benzoate + H(+) = a 2-methoxy-6-(all-trans-polyprenyl)phenol + CO2. Its pathway is cofactor biosynthesis; ubiquinone biosynthesis. Lyase that catalyzes the C1-decarboxylation of 4-hydroxy-3-methoxy-5-(all-trans-polyprenyl)benzoic acid into 2-methoxy-6-(all-trans-polyprenyl)phenol during ubiquinone biosynthesis. The polypeptide is Ubiquinone biosynthesis protein COQ4, mitochondrial (Komagataella phaffii (strain GS115 / ATCC 20864) (Yeast)).